The sequence spans 503 residues: Probable cytosol aminopeptidase (503 aa).

Residues Lys-270 and Asp-275 each contribute to the Mn(2+) site. Residue Lys-282 is part of the active site. Residues Asp-293, Asp-352, and Glu-354 each coordinate Mn(2+). Arg-356 is a catalytic residue.

The protein belongs to the peptidase M17 family. It depends on Mn(2+) as a cofactor.

The protein resides in the cytoplasm. The catalysed reaction is Release of an N-terminal amino acid, Xaa-|-Yaa-, in which Xaa is preferably Leu, but may be other amino acids including Pro although not Arg or Lys, and Yaa may be Pro. Amino acid amides and methyl esters are also readily hydrolyzed, but rates on arylamides are exceedingly low.. The enzyme catalyses Release of an N-terminal amino acid, preferentially leucine, but not glutamic or aspartic acids.. Its function is as follows. Presumably involved in the processing and regular turnover of intracellular proteins. Catalyzes the removal of unsubstituted N-terminal amino acids from various peptides. This is Probable cytosol aminopeptidase from Klebsiella pneumoniae (strain 342).